The primary structure comprises 148 residues: ASCH domain-containing ribonuclease (148 aa).

The region spanning 13 to 70 (SLWPEFAKAIVSGKKTVEFRRRIPLPALSARIWIYATRPVKSVIGFAYLEAIVQGDVN) is the ASCH domain.

Mn(2+) is required as a cofactor. The cofactor is Ni(2+).

Shows sequence-specific endoribonuclease activity towards single-stranded RNA (ssRNA), with a preference for the bond between pyrimidine and adenine nucleotides. May also have 5'-exonuclease activity. The chain is ASCH domain-containing ribonuclease from Zymomonas mobilis subsp. mobilis (strain ATCC 10988 / DSM 424 / LMG 404 / NCIMB 8938 / NRRL B-806 / ZM1).